Reading from the N-terminus, the 274-residue chain is WIMGHMVNAIEQVDEFLNLGANAIEFDIDFDKDGIAQITHHGIPCDCGRKCTKKAIFTEYLDNIRQVTTPDDPKFREQLVLLALDLKLQRISSAKAYRAGEDVAKKLLDHYWQRGNSRARAYILLNIPLVEDYEFIRAFKDTLKNEGYESYNDRVGINFTGNEDLDKIRDVLEILGIHKQVWQADGITSCFARGTERLKEALEKRDTPGYNYINKVYAWTLVRKSIMRRSLRLGVDGVMSNNPDRVIKVLKEKEFADKFRLATYNDNPWEKFRG.

His5 is an active-site residue. Mg(2+)-binding residues include Glu25 and Asp27. His41 acts as the Nucleophile in catalysis. Cystine bridges form between Cys45-Cys51 and Cys47-Cys190. Mg(2+) is bound at residue Asp85.

It belongs to the arthropod phospholipase D family. Class II subfamily. Mg(2+) serves as cofactor. As to expression, expressed by the venom gland.

The protein localises to the secreted. The enzyme catalyses an N-(acyl)-sphingosylphosphocholine = an N-(acyl)-sphingosyl-1,3-cyclic phosphate + choline. It catalyses the reaction an N-(acyl)-sphingosylphosphoethanolamine = an N-(acyl)-sphingosyl-1,3-cyclic phosphate + ethanolamine. The catalysed reaction is a 1-acyl-sn-glycero-3-phosphocholine = a 1-acyl-sn-glycero-2,3-cyclic phosphate + choline. It carries out the reaction a 1-acyl-sn-glycero-3-phosphoethanolamine = a 1-acyl-sn-glycero-2,3-cyclic phosphate + ethanolamine. Its function is as follows. Dermonecrotic toxins cleave the phosphodiester linkage between the phosphate and headgroup of certain phospholipids (sphingolipid and lysolipid substrates), forming an alcohol (often choline) and a cyclic phosphate. This toxin acts on sphingomyelin (SM). It may also act on ceramide phosphoethanolamine (CPE), lysophosphatidylcholine (LPC) and lysophosphatidylethanolamine (LPE), but not on lysophosphatidylserine (LPS), and lysophosphatidylglycerol (LPG). It acts by transphosphatidylation, releasing exclusively cyclic phosphate products as second products. Induces dermonecrosis, hemolysis, increased vascular permeability, edema, inflammatory response, and platelet aggregation. This is Dermonecrotic toxin SdSicTox-betaIIB1bviii from Sicarius cf. damarensis (strain GJB-2008) (Six-eyed sand spider).